Reading from the N-terminus, the 400-residue chain is Glutamyl-tRNA reductase (400 aa).

Substrate contacts are provided by residues 45–48, Ser103, 108–110, and Gln114; these read TCNR and EDQ. Cys46 serves as the catalytic Nucleophile. 179-184 provides a ligand contact to NADP(+); the sequence is GYGEIG.

The protein belongs to the glutamyl-tRNA reductase family. As to quaternary structure, homodimer.

It carries out the reaction (S)-4-amino-5-oxopentanoate + tRNA(Glu) + NADP(+) = L-glutamyl-tRNA(Glu) + NADPH + H(+). It functions in the pathway porphyrin-containing compound metabolism; protoporphyrin-IX biosynthesis; 5-aminolevulinate from L-glutamyl-tRNA(Glu): step 1/2. In terms of biological role, catalyzes the NADPH-dependent reduction of glutamyl-tRNA(Glu) to glutamate 1-semialdehyde (GSA). This is Glutamyl-tRNA reductase from Clostridium perfringens (strain ATCC 13124 / DSM 756 / JCM 1290 / NCIMB 6125 / NCTC 8237 / Type A).